The following is a 60-amino-acid chain: Toxin FS-2 (60 aa).

Intrachain disulfides connect cysteine 3/cysteine 22, cysteine 17/cysteine 39, cysteine 41/cysteine 52, and cysteine 53/cysteine 58. Positions 41–48 are important for binding to L-type calcium channels; that stretch reads CPTAMWPY.

The protein belongs to the three-finger toxin family. Short-chain subfamily. L-type calcium blocker sub-subfamily. Expressed by the venom gland.

Its subcellular location is the secreted. Functionally, specific blocker of the voltage-dependent L-type calcium channel (Cav1/CACNA1). Inhibits cardiac contractions. The chain is Toxin FS-2 from Dendroaspis polylepis polylepis (Black mamba).